Here is a 438-residue protein sequence, read N- to C-terminus: Adenosylhomocysteinase (438 aa).

The substrate site is built by Thr-64, Asp-139, and Glu-164. 165-167 (TTT) is a binding site for NAD(+). Substrate-binding residues include Lys-194 and Asp-198. Residues Asn-199, 228–233 (GYGDVG), Glu-251, Asn-286, 307–309 (IGH), and Asn-352 contribute to the NAD(+) site.

Belongs to the adenosylhomocysteinase family. It depends on NAD(+) as a cofactor.

It localises to the cytoplasm. It catalyses the reaction S-adenosyl-L-homocysteine + H2O = L-homocysteine + adenosine. It participates in amino-acid biosynthesis; L-homocysteine biosynthesis; L-homocysteine from S-adenosyl-L-homocysteine: step 1/1. May play a key role in the regulation of the intracellular concentration of adenosylhomocysteine. The protein is Adenosylhomocysteinase of Coxiella burnetii (strain Dugway 5J108-111).